A 197-amino-acid chain; its full sequence is Putative ankyrin repeat protein R875 (197 aa).

ANK repeat units lie at residues 78–106 (LNKC…DIRE), 107–136 (NDDC…DIRA), 138–166 (DDDA…NFRK), and 168–196 (NDYE…VLHE).

This chain is Putative ankyrin repeat protein R875, found in Acanthamoeba polyphaga mimivirus (APMV).